A 369-amino-acid polypeptide reads, in one-letter code: Glutamate 5-kinase (369 aa).

Lys8 serves as a coordination point for ATP. Residues Ser49, Asp136, and Asn148 each coordinate substrate. ATP is bound by residues 168–169 (TD) and 212–218 (TGGMMTK). Positions 277–355 (TGKLYLDSGA…KEISTILGYV (79 aa)) constitute a PUA domain.

This sequence belongs to the glutamate 5-kinase family.

Its subcellular location is the cytoplasm. It carries out the reaction L-glutamate + ATP = L-glutamyl 5-phosphate + ADP. The protein operates within amino-acid biosynthesis; L-proline biosynthesis; L-glutamate 5-semialdehyde from L-glutamate: step 1/2. Its function is as follows. Catalyzes the transfer of a phosphate group to glutamate to form L-glutamate 5-phosphate. This Trichormus variabilis (strain ATCC 29413 / PCC 7937) (Anabaena variabilis) protein is Glutamate 5-kinase.